We begin with the raw amino-acid sequence, 261 residues long: Triosephosphate isomerase (261 aa).

2 residues coordinate D-glyceraldehyde 3-phosphate: Asn11 and Lys13. The Electrophile role is filled by His102. Glu174 (proton acceptor) is an active-site residue. D-glyceraldehyde 3-phosphate contacts are provided by Gly180, Leu239, and Gly241.

Belongs to the triosephosphate isomerase family. In terms of assembly, homodimer.

It carries out the reaction D-glyceraldehyde 3-phosphate = dihydroxyacetone phosphate. Its pathway is carbohydrate biosynthesis; gluconeogenesis. It participates in carbohydrate degradation; glycolysis; D-glyceraldehyde 3-phosphate from glycerone phosphate: step 1/1. In terms of biological role, catalyzes the interconversion of glyceraldehyde 3-phosphate and dihydroxyacetone phosphate in the glycolytic and gluconeogenic pathways. The protein is Triosephosphate isomerase of Entamoeba histolytica (strain ATCC 30459 / HM-1:IMSS / ABRM).